Consider the following 489-residue polypeptide: UDP-N-acetylmuramate--L-alanine ligase (489 aa).

128–134 (GTHGKTT) serves as a coordination point for ATP.

This sequence belongs to the MurCDEF family.

It localises to the cytoplasm. The catalysed reaction is UDP-N-acetyl-alpha-D-muramate + L-alanine + ATP = UDP-N-acetyl-alpha-D-muramoyl-L-alanine + ADP + phosphate + H(+). It participates in cell wall biogenesis; peptidoglycan biosynthesis. Functionally, cell wall formation. The protein is UDP-N-acetylmuramate--L-alanine ligase of Shewanella woodyi (strain ATCC 51908 / MS32).